We begin with the raw amino-acid sequence, 246 residues long: MKEKYTVEKVYENIKVEDGIYKLSIKGEFEVRPGQFYLLRAWDIEPTLSRPISIYDADDEKISFLYSVVGKGTEILSKLKSGDEIKITGPLGNGFNVKRISGKVAIVCGGIGVAPMVYLAKNLKNCNVDFYAGFKTVSKTVDNVEKYVKELKLSTEDGSIGHKGYVTDNFKPEEYDYVLCCGPEIMMYKVVKMCEQKNVPVYISMEKKMACGIGACLVCTCKTKGGRRRACKEGPVFLGSELILND.

The FAD-binding FR-type domain maps to 3-97 (EKYTVEKVYE…TGPLGNGFNV (95 aa)). FAD contacts are provided by residues 50 to 53 (RPIS) and 72 to 73 (GT). Cys-211, Cys-216, Cys-219, and Cys-231 together coordinate [2Fe-2S] cluster.

This sequence belongs to the PyrK family. As to quaternary structure, heterotetramer of 2 PyrK and 2 PyrD type B subunits. It depends on [2Fe-2S] cluster as a cofactor. The cofactor is FAD.

Its pathway is pyrimidine metabolism; UMP biosynthesis via de novo pathway; orotate from (S)-dihydroorotate (NAD(+) route): step 1/1. Responsible for channeling the electrons from the oxidation of dihydroorotate from the FMN redox center in the PyrD type B subunit to the ultimate electron acceptor NAD(+). The polypeptide is Dihydroorotate dehydrogenase B (NAD(+)), electron transfer subunit (Clostridium acetobutylicum (strain ATCC 824 / DSM 792 / JCM 1419 / IAM 19013 / LMG 5710 / NBRC 13948 / NRRL B-527 / VKM B-1787 / 2291 / W)).